The following is a 556-amino-acid chain: Testis-specific protein 10-interacting protein (556 aa).

The segment covering 1 to 20 (MGQETNMLNAHQQLVRTSSG) has biased composition (polar residues). Disordered regions lie at residues 1 to 102 (MGQE…SPRK) and 180 to 320 (CTSI…GPWD). Positions 75 to 85 (KDRRLRGRNKK) are enriched in basic residues. Acidic residues-rich tracts occupy residues 213–225 (EPEESEPEGLGAE) and 246–260 (LEEEQFSEATEEAED). Over residues 266-278 (PWRRRTSSRRKGR) the composition is skewed to basic residues. Basic and acidic residues predominate over residues 304-320 (EPQRRKPRAKELEGPWD). Residues 387–463 (LRAWELQQRE…ELQGIQHRVQ (77 aa)) are a coiled coil. The tract at residues 503-556 (AGKRDMEGAPRRHRSHRSVGARMEPSSQSPPKMEPTGSQADQHFAPNPDQELSP) is disordered. Polar residues predominate over residues 527–543 (PSSQSPPKMEPTGSQAD).

The sequence is that of Testis-specific protein 10-interacting protein (TSGA10IP) from Bos taurus (Bovine).